We begin with the raw amino-acid sequence, 1150 residues long: ATP-dependent helicase/deoxyribonuclease subunit B (1150 aa).

8-15 (GRAGSGKS) provides a ligand contact to ATP. Positions 789, 1109, 1112, and 1118 each coordinate [4Fe-4S] cluster.

It belongs to the helicase family. AddB/RexB type 1 subfamily. In terms of assembly, heterodimer of AddA and AddB. Mg(2+) serves as cofactor. It depends on [4Fe-4S] cluster as a cofactor.

The heterodimer acts as both an ATP-dependent DNA helicase and an ATP-dependent, dual-direction single-stranded exonuclease. Recognizes the chi site generating a DNA molecule suitable for the initiation of homologous recombination. The AddB subunit has 5' -&gt; 3' nuclease activity but not helicase activity. The protein is ATP-dependent helicase/deoxyribonuclease subunit B of Clostridium kluyveri (strain NBRC 12016).